A 276-amino-acid chain; its full sequence is E3 ubiquitin-protein ligase CCNB1IP1 (276 aa).

The RING-type; atypical zinc finger occupies 10–52; it reads CNYRKCRIKLSGYAWVTACSHIFCDQHGSGEFSRSPAICPACN. A coiled-coil region spans residues 146–182; it reads MKKVLEEYKKKFSDISEKLMERNRQYQKLQGLYDSLR.

In terms of assembly, interacts with CCNB1, UBE2L3 and NF2. In terms of processing, ubiquitinated; autoubiquitinated. Phosphorylated by CDK1 on serine or threonine residues (in vitro). Expressed predominantly in the testes and 17 day embryos (corresponding to prophase I in females). Weakly or not expressed in other tissues.

It is found in the nucleus. The protein localises to the chromosome. It catalyses the reaction S-ubiquitinyl-[E2 ubiquitin-conjugating enzyme]-L-cysteine + [acceptor protein]-L-lysine = [E2 ubiquitin-conjugating enzyme]-L-cysteine + N(6)-ubiquitinyl-[acceptor protein]-L-lysine.. It participates in protein modification; protein ubiquitination. Its function is as follows. Ubiquitin E3 ligase that acts as a limiting factor for crossing-over during meiosis: required during zygonema to limit the colocalization of RNF212 with MutS-gamma-associated recombination sites and thereby establish early differentiation of crossover and non-crossover sites. Later, it is directed by MutL-gamma to stably accumulate at designated crossover sites. Probably promotes the dissociation of RNF212 and MutS-gamma to allow the progression of recombination and the implementation of the final steps of crossing over. Modulates cyclin-B levels and participates in the regulation of cell cycle progression through the G2 phase. Overexpression causes delayed entry into mitosis. The sequence is that of E3 ubiquitin-protein ligase CCNB1IP1 (Ccnb1ip1) from Mus musculus (Mouse).